We begin with the raw amino-acid sequence, 649 residues long: Lipolysis-stimulated lipoprotein receptor (649 aa).

Over residues 1–16 (MQQDGLGVGTRNGSGK) the composition is skewed to gly residues. Residues 1–21 (MQQDGLGVGTRNGSGKGRSVH) form a disordered region. At 1–259 (MQQDGLGVGT…PGFQAGPIED (259 aa)) the chain is on the extracellular side. In terms of domain architecture, Ig-like V-type spans 86 to 234 (PARAIQVTVS…DLQGNNEAYA (149 aa)). A disulfide bridge connects residues C111 and C218. Residues 260-280 (WLFVVVVCLAAFLIFLLLGIC) traverse the membrane as a helical segment. Residues 281-649 (WCQCCPHTCC…LALSRESLVV (369 aa)) are Cytoplasmic-facing. T336 carries the post-translational modification Phosphothreonine. Residues S365, S371, S389, S432, and S436 each carry the phosphoserine modification. The disordered stretch occupies residues 414-649 (NFDPSRPGPP…LALSRESLVV (236 aa)). The segment covering 426–444 (RVERAMSEVTSLHEDDWRS) has biased composition (basic and acidic residues). A Phosphothreonine modification is found at T453. S464, S467, and S493 each carry phosphoserine. T501 is subject to Phosphothreonine. Over residues 502–518 (PPSTAESGSRSPTSNGG) the composition is skewed to polar residues. Phosphoserine is present on residues S528 and S530. Basic and acidic residues predominate over residues 529–565 (RSRDDLYDQDDSRDFPRSRDPHYDDFRSRERPPADPR). Y535 carries the post-translational modification Phosphotyrosine. S540 and S579 each carry phosphoserine. The segment covering 589–609 (RLLEEAVRKKGSEERRRPHKE) has biased composition (basic and acidic residues). The residue at position 631 (S631) is a Phosphoserine. K638 participates in a covalent cross-link: Glycyl lysine isopeptide (Lys-Gly) (interchain with G-Cter in ubiquitin). S643 and S646 each carry phosphoserine.

The protein belongs to the immunoglobulin superfamily. LISCH7 family. Homotrimer or homotetramer. Assembles into cell-cell contacts. Interacts (via the cytoplasmic domain) with MARVELD2 (via C-terminal cytoplasmic domain); the interaction is required to recruit MARVELD2 to tricellular contacts. Interacts with OCLN. Phosphorylation at Ser-365 by MAPK8/JNK1 and MAPK9/JNK2 may be required for exclusive localization at tricellular tight junstions. Post-translationally, polyubiquitinated at Lys-638 via 'Lys-63'-linked ubiquitin chains; deubiquitinated by USP53.

The protein resides in the cell membrane. Its subcellular location is the cell junction. It is found in the tight junction. Its function is as follows. Probable role in the clearance of triglyceride-rich lipoprotein from blood. Binds chylomicrons, LDL and VLDL in presence of free fatty acids and allows their subsequent uptake in the cells. Maintains epithelial barrier function by recruiting MARVELD2/tricellulin to tricellular tight junctions. The polypeptide is Lipolysis-stimulated lipoprotein receptor (Homo sapiens (Human)).